A 90-amino-acid chain; its full sequence is Small ribosomal subunit protein bS18A (90 aa).

The protein belongs to the bacterial ribosomal protein bS18 family. In terms of assembly, part of the 30S ribosomal subunit. Forms a tight heterodimer with protein bS6.

Functionally, binds as a heterodimer with protein bS6 to the central domain of the 16S rRNA, where it helps stabilize the platform of the 30S subunit. The polypeptide is Small ribosomal subunit protein bS18A (Roseiflexus castenholzii (strain DSM 13941 / HLO8)).